A 289-amino-acid polypeptide reads, in one-letter code: 33 kDa chaperonin (289 aa).

2 disulfide bridges follow: cysteine 230-cysteine 232 and cysteine 263-cysteine 266.

It belongs to the HSP33 family. In terms of processing, under oxidizing conditions two disulfide bonds are formed involving the reactive cysteines. Under reducing conditions zinc is bound to the reactive cysteines and the protein is inactive.

It is found in the cytoplasm. Functionally, redox regulated molecular chaperone. Protects both thermally unfolding and oxidatively damaged proteins from irreversible aggregation. Plays an important role in the bacterial defense system toward oxidative stress. The protein is 33 kDa chaperonin of Shigella flexneri serotype 5b (strain 8401).